An 849-amino-acid polypeptide reads, in one-letter code: Putative respiratory burst oxidase homolog protein G (849 aa).

Over residues 1–17 the composition is skewed to basic and acidic residues; the sequence is MQRVSFEVKDTEAEKSS. The disordered stretch occupies residues 1–53; that stretch reads MQRVSFEVKDTEAEKSSSEILSGSLPSTYRNPAMENVGNAVDDGSSVKNNPKL. At 1 to 303 the chain is on the cytoplasmic side; sequence MQRVSFEVKD…RFFVLDSWQR (303 aa). A compositionally biased stretch (low complexity) spans 18 to 27; it reads SEILSGSLPS. EF-hand-like stretches follow at residues 118–128 and 153–164; these read TANTDGLLLRS and SHLKGDVITETE. EF-hand domains lie at 176–211 and 220–255; these read SFDS…SSSA and KADE…AETK. Positions 189, 191, 193, 195, and 200 each coordinate Ca(2+). Position 270 is a phosphoserine (Ser-270). Residues 304–324 form a helical membrane-spanning segment; sequence VWVIALWLTIMAILFAYKYIQ. The Extracellular portion of the chain corresponds to 325–392; the sequence is YKNRAVYEVL…LNFHKVIAVG (68 aa). The Ferric oxidoreductase domain maps to 342-502; that stretch reads KGAAETLKLN…LFVIVYILLV (161 aa). A helical membrane pass occupies residues 393 to 409; sequence IAIGVAIHSVSHLACDF. Topologically, residues 410–444 are cytoplasmic; the sequence is PLLIAATPAEYMPLGKFFGEEQPKRYLHFVKSTEG. Residues 445-465 traverse the membrane as a helical segment; it reads ITGLVMVFLMVIAFTLAMPWF. The Extracellular portion of the chain corresponds to 466 to 489; sequence RRGKLEKKLPGPLKKLASFNAFWY. A helical transmembrane segment spans residues 490 to 510; sequence THHLFVIVYILLVLHGYYIYL. The Cytoplasmic segment spans residues 511–518; it reads NKEWYKKT. Residues 519 to 536 traverse the membrane as a helical segment; that stretch reads TWMYLAVPVALYAYERLI. The Extracellular portion of the chain corresponds to 537–659; the sequence is RAFRSSIRTV…PYGAPAQDYK (123 aa). An FAD-binding FR-type domain is found at 541-657; the sequence is SSIRTVKVLK…DGPYGAPAQD (117 aa). A helical membrane pass occupies residues 660-680; sequence KYEVVLLIGLGIGATPMISII. The Cytoplasmic portion of the chain corresponds to 681-849; the sequence is KDIINNTETK…TRFSFHKENF (169 aa).

This sequence belongs to the RBOH (TC 5.B.1.3) family. Monomer and homodimer.

The protein resides in the membrane. Its function is as follows. Calcium-dependent NADPH oxidase that generates superoxide. This is Putative respiratory burst oxidase homolog protein G (RBOHG) from Arabidopsis thaliana (Mouse-ear cress).